Reading from the N-terminus, the 113-residue chain is MGEHAIKRHMRQRKPTKHPLAQKRGARILVLTDDPRRSVLIVPGCHLDSMRREKNAYYFQDGNALVGMVVSGGTVEYDADDRTYVVQLTDGRHTTESSFEHSSPSRSPQSDDL.

Disordered stretches follow at residues Met1–Gln22 and Asp90–Leu113. The span at Asp90–Phe99 shows a compositional bias: basic and acidic residues. The segment covering Glu100–Leu113 has biased composition (low complexity).

This is an uncharacterized protein from Mycobacterium tuberculosis (strain CDC 1551 / Oshkosh).